A 545-amino-acid polypeptide reads, in one-letter code: Chaperonin GroEL (545 aa).

Residues 30–33, Lys-51, 87–91, Gly-415, and Asp-495 each bind ATP; these read TLGP and DGTTT.

It belongs to the chaperonin (HSP60) family. In terms of assembly, forms a cylinder of 14 subunits composed of two heptameric rings stacked back-to-back. Interacts with the co-chaperonin GroES.

It localises to the cytoplasm. The catalysed reaction is ATP + H2O + a folded polypeptide = ADP + phosphate + an unfolded polypeptide.. Functionally, together with its co-chaperonin GroES, plays an essential role in assisting protein folding. The GroEL-GroES system forms a nano-cage that allows encapsulation of the non-native substrate proteins and provides a physical environment optimized to promote and accelerate protein folding. This Shewanella denitrificans (strain OS217 / ATCC BAA-1090 / DSM 15013) protein is Chaperonin GroEL.